Here is a 312-residue protein sequence, read N- to C-terminus: Aspartate carbamoyltransferase catalytic subunit (312 aa).

Positions 54 and 55 each coordinate carbamoyl phosphate. K83 provides a ligand contact to L-aspartate. Residues R104, H132, and Q135 each contribute to the carbamoyl phosphate site. L-aspartate is bound by residues R165 and R226. The carbamoyl phosphate site is built by L263 and P264.

Belongs to the aspartate/ornithine carbamoyltransferase superfamily. ATCase family. Heterooligomer of catalytic and regulatory chains.

It carries out the reaction carbamoyl phosphate + L-aspartate = N-carbamoyl-L-aspartate + phosphate + H(+). It participates in pyrimidine metabolism; UMP biosynthesis via de novo pathway; (S)-dihydroorotate from bicarbonate: step 2/3. Its function is as follows. Catalyzes the condensation of carbamoyl phosphate and aspartate to form carbamoyl aspartate and inorganic phosphate, the committed step in the de novo pyrimidine nucleotide biosynthesis pathway. The polypeptide is Aspartate carbamoyltransferase catalytic subunit (Methanothermobacter thermautotrophicus (strain ATCC 29096 / DSM 1053 / JCM 10044 / NBRC 100330 / Delta H) (Methanobacterium thermoautotrophicum)).